We begin with the raw amino-acid sequence, 338 residues long: Ketol-acid reductoisomerase (NADP(+)) (338 aa).

One can recognise a KARI N-terminal Rossmann domain in the interval 1–181; the sequence is MKVYYDKDAD…GGTRGGVIET (181 aa). Residues 24–27, R47, and S52 contribute to the NADP(+) site; that span reads YGSQ. The active site involves H107. G133 lines the NADP(+) pocket. Residues 182 to 327 enclose the KARI C-terminal knotted domain; that stretch reads TFKEETETDL…SRLRDMMPWI (146 aa). Mg(2+) is bound by residues D190, E194, E226, and E230. S251 provides a ligand contact to substrate.

The protein belongs to the ketol-acid reductoisomerase family. Mg(2+) is required as a cofactor.

It carries out the reaction (2R)-2,3-dihydroxy-3-methylbutanoate + NADP(+) = (2S)-2-acetolactate + NADPH + H(+). The catalysed reaction is (2R,3R)-2,3-dihydroxy-3-methylpentanoate + NADP(+) = (S)-2-ethyl-2-hydroxy-3-oxobutanoate + NADPH + H(+). It functions in the pathway amino-acid biosynthesis; L-isoleucine biosynthesis; L-isoleucine from 2-oxobutanoate: step 2/4. It participates in amino-acid biosynthesis; L-valine biosynthesis; L-valine from pyruvate: step 2/4. Involved in the biosynthesis of branched-chain amino acids (BCAA). Catalyzes an alkyl-migration followed by a ketol-acid reduction of (S)-2-acetolactate (S2AL) to yield (R)-2,3-dihydroxy-isovalerate. In the isomerase reaction, S2AL is rearranged via a Mg-dependent methyl migration to produce 3-hydroxy-3-methyl-2-ketobutyrate (HMKB). In the reductase reaction, this 2-ketoacid undergoes a metal-dependent reduction by NADPH to yield (R)-2,3-dihydroxy-isovalerate. In Nitrosomonas eutropha (strain DSM 101675 / C91 / Nm57), this protein is Ketol-acid reductoisomerase (NADP(+)).